The sequence spans 711 residues: DNA topoisomerase 3 (711 aa).

Residues 2-135 (KSLILAEKPS…IRRLWISSVT (134 aa)) enclose the Toprim domain. Mg(2+)-binding residues include Glu8 and Asp104. A Topo IA-type catalytic domain is found at 152–580 (YNDLYYAALA…EMKDFTKDVV (429 aa)). Positions 186-191 (SLGRVQ) are interaction with DNA. Tyr305 acts as the O-(5'-phospho-DNA)-tyrosine intermediate in catalysis. Positions 691–711 (MNKNEGLDNNPFKDALKNLNL) are disordered.

This sequence belongs to the type IA topoisomerase family. Mg(2+) serves as cofactor.

It carries out the reaction ATP-independent breakage of single-stranded DNA, followed by passage and rejoining.. In terms of biological role, releases the supercoiling and torsional tension of DNA, which is introduced during the DNA replication and transcription, by transiently cleaving and rejoining one strand of the DNA duplex. Introduces a single-strand break via transesterification at a target site in duplex DNA. The scissile phosphodiester is attacked by the catalytic tyrosine of the enzyme, resulting in the formation of a DNA-(5'-phosphotyrosyl)-enzyme intermediate and the expulsion of a 3'-OH DNA strand. The free DNA strand then undergoes passage around the unbroken strand, thus removing DNA supercoils. Finally, in the religation step, the DNA 3'-OH attacks the covalent intermediate to expel the active-site tyrosine and restore the DNA phosphodiester backbone. This is DNA topoisomerase 3 from Staphylococcus aureus (strain Mu50 / ATCC 700699).